The following is a 760-amino-acid chain: MAPLLALFYLLQLGPGLAALFCNQNVNITGGNFTLSHGWAPGSLLIYSCPLGRYPSPAWRKCQSNGQWLTPRSSSHHTLRSSRMVKAVCKPVRCLAPSSFENGIYFPRLVSYPVGSNVSFECEQDFTLRGSPVRYCRPNGLWDGETAVCDNGASHCPNPGISVGTARTGLNFDLGDKVRYRCSSSNMVLTGSAERECQSNGVWSGSEPICRQPYSYDFPEDVASALDTSLTNLLGATNPTQNLLTKSLGRKIIIQRSGHLNLYLLLDASQSVTEKDFDIFKKSAELMVERIFSFEVNVSVAIITFASQPKTIMSILSERSQDVTEVITSLDSASYKDHENATGTNTYEVLIRVYSMMQSQMDRLGMETSAWKEIRHTIILLTDGKSNMGDSPKKAVTRIRELLSIEQNRDDYLDIYAIGVGKLDVDWKELNELGSKKDGERHAFILQDAKALQQIFEHMLDVSKLTDTICGVGNMSANASDQERTPWQVTFKPKSKETCQGSLISDQWVLTAAHCFHDIQMEDHHLWRVNVGDPTSQHGKEFLVEDVIIAPGFNVHAKRKQGISEFYADDIALLKLSRKVKMSTHARPICLPCTVGANMALRRSPGSTCKDHETELLSQQKVPAHFVALNGNRLNINLRTGPEWTRCIQAVSQNKNIFPSLTNVSEVVTDQFLCSGMEEEDDNPCKGESGGAVFLGRRYRFFQVGLVSWGLFDPCHGSSNKNLRKKPPRGVLPRDFHISLFRLQPWLRQHLDGVLDFLPL.

The N-terminal stretch at 1–18 (MAPLLALFYLLQLGPGLA) is a signal peptide. Sushi domains lie at 20 to 90 (LFCN…AVCK), 92 to 151 (VRCL…VCDN), and 154 to 212 (SHCP…ICRQ). 6 disulfide bridges follow: Cys22/Cys62, Cys49/Cys89, Cys94/Cys136, Cys122/Cys149, Cys156/Cys197, and Cys182/Cys210. Asn27 and Asn32 each carry an N-linked (GlcNAc...) asparagine glycan. Asn117 is a glycosylation site (N-linked (GlcNAc...) asparagine). In terms of domain architecture, VWFA spans 261-459 (NLYLLLDASQ…KALQQIFEHM (199 aa)). The MIDAS-like motif motif lies at 267 to 271 (DASQS). Mg(2+)-binding residues include Ser269 and Ser271. Residues Asn297 and Asn340 are each glycosylated (N-linked (GlcNAc...) asparagine). Residue Thr344 coordinates Mg(2+). Intrachain disulfides connect Cys470/Cys590, Cys499/Cys515, Cys593/Cys609, Cys647/Cys674, and Cys685/Cys715. The Peptidase S1 domain maps to 471–752 (GVGNMSANAS…LQPWLRQHLD (282 aa)). N-linked (GlcNAc...) asparagine glycans are attached at residues Asn474 and Asn478. Catalysis depends on charge relay system residues His514 and Asp570. Asn663 carries an N-linked (GlcNAc...) asparagine glycan. Ser689 acts as the Charge relay system in catalysis.

The protein belongs to the peptidase S1 family. As to quaternary structure, serine protease component of the C3 convertase, also named C4bC2b, composed of the serine protease complement C2b and complement C4b. Serine protease component of the C5 convertase, also named C4bC2bC3b, composed of the serine protease complement C2b, complement C3b, as well as complement C4b. It depends on Mg(2+) as a cofactor. Requires Mn(2+) as cofactor. Cleaved and activated by different proteases depending on the complement pathway to generate complement C2a and serine protease complement C2b chains. Cleaved and activated by C1S following activation by the classical complement system. Cleaved and activated by MASP2 following activation by the lectin complement system. Cleaved and activated by GZMK following activation by the GZMK complement system.

The protein resides in the secreted. The protein localises to the cell surface. It carries out the reaction Selective cleavage of Arg-|-Ser bond in complement component C3 alpha-chain to form C3a and C3b, and Arg-|-Xaa bond in complement component C5 alpha-chain to form C5a and C5b.. Its function is as follows. Precursor of the catalytic component of the C3 and C5 convertase complexes, which are part of the complement pathway, a cascade of proteins that leads to phagocytosis and breakdown of pathogens and signaling that strengthens the adaptive immune system. Component C2 is part of the classical, lectin and GZMK complement systems. In terms of biological role, catalytic component of the complement C3 and C5 convertase complexes. Following complement activation, recruited to the surface of pathogens by complement C4b opsonin to form the C3 convertase, or C3b and C4b opsonins to form the C5 convertase. As part of the C3 convertase, cleaves and activate C3 into C3a anaphylatoxin and C3b opsonin, the next components of the complement pathways. As part of the C5 convertase, cleaves and activate C5 into C5a anaphylatoxin and C5b component of the membrane attack complex. The sequence is that of Complement C2 from Mus musculus (Mouse).